The following is a 132-amino-acid chain: ATP synthase epsilon chain (132 aa).

It belongs to the ATPase epsilon chain family. As to quaternary structure, F-type ATPases have 2 components, CF(1) - the catalytic core - and CF(0) - the membrane proton channel. CF(1) has five subunits: alpha(3), beta(3), gamma(1), delta(1), epsilon(1). CF(0) has three main subunits: a, b and c.

It localises to the cell membrane. In terms of biological role, produces ATP from ADP in the presence of a proton gradient across the membrane. This chain is ATP synthase epsilon chain, found in Desulforamulus reducens (strain ATCC BAA-1160 / DSM 100696 / MI-1) (Desulfotomaculum reducens).